The primary structure comprises 89 residues: Small ribosomal subunit protein uS14 (89 aa).

The protein belongs to the universal ribosomal protein uS14 family. In terms of assembly, part of the 30S ribosomal subunit. Contacts proteins S3 and S10.

Functionally, binds 16S rRNA, required for the assembly of 30S particles and may also be responsible for determining the conformation of the 16S rRNA at the A site. The protein is Small ribosomal subunit protein uS14 of Aster yellows witches'-broom phytoplasma (strain AYWB).